Here is a 163-residue protein sequence, read N- to C-terminus: ATP synthase subunit b', chloroplastic (163 aa).

A helical membrane pass occupies residues 26–46 (ATLPLMALQFILLTVILTFVF).

The protein belongs to the ATPase B chain family. In terms of assembly, F-type ATPases have 2 components, F(1) - the catalytic core - and F(0) - the membrane proton channel. F(1) has five subunits: alpha(3), beta(3), gamma(1), delta(1), epsilon(1). F(0) has four main subunits: a(1), b(1), b'(1) and c(10-14). The alpha and beta chains form an alternating ring which encloses part of the gamma chain. F(1) is attached to F(0) by a central stalk formed by the gamma and epsilon chains, while a peripheral stalk is formed by the delta, b and b' chains.

The protein localises to the plastid. It is found in the chloroplast thylakoid membrane. In terms of biological role, f(1)F(0) ATP synthase produces ATP from ADP in the presence of a proton or sodium gradient. F-type ATPases consist of two structural domains, F(1) containing the extramembraneous catalytic core and F(0) containing the membrane proton channel, linked together by a central stalk and a peripheral stalk. During catalysis, ATP synthesis in the catalytic domain of F(1) is coupled via a rotary mechanism of the central stalk subunits to proton translocation. Functionally, component of the F(0) channel, it forms part of the peripheral stalk, linking F(1) to F(0). The b'-subunit is a diverged and duplicated form of b found in plants and photosynthetic bacteria. The chain is ATP synthase subunit b', chloroplastic from Ochrosphaera neapolitana.